Reading from the N-terminus, the 664-residue chain is Protein cueball (664 aa).

The N-terminal stretch at 1–21 is a signal peptide; it reads MRNLGIAVTFAVLLVIGYVTA. Over 22-552 the chain is Extracellular; sequence LEWDAVVTTD…VTYCKNSFNR (531 aa). N-linked (GlcNAc...) asparagine glycosylation is found at Asn40, Asn140, and Asn188. LDL-receptor class B repeat units lie at residues 115-157, 168-211, and 212-257; these read RKLY…ENHD, RHLY…DHYN, and NRIY…NSQY. 3 consecutive EGF-like domains span residues 367–399, 402–438, and 473–510; these read EIPI…FEGE, DRNI…ARCE, and EEYT…KRCE. Disulfide bonds link Cys371–Cys380, Cys375–Cys390, Cys406–Cys416, Cys410–Cys426, Cys428–Cys437, Cys477–Cys487, Cys481–Cys498, and Cys500–Cys509. Asn431 carries an N-linked (GlcNAc...) asparagine glycan. Residue Asn491 is glycosylated (N-linked (GlcNAc...) asparagine). Asn551 carries N-linked (GlcNAc...) asparagine glycosylation. A helical membrane pass occupies residues 553 to 573; that stretch reads TVVYVSLAFTASLVTLVTILC. Residues 574–664 lie on the Cytoplasmic side of the membrane; sequence TVRRMYERNR…KLPSCVAEKN (91 aa).

Belongs to the cueball family.

The protein resides in the cell membrane. In terms of biological role, has a role in spermatogenesis and oogenesis. This Aedes aegypti (Yellowfever mosquito) protein is Protein cueball.